The chain runs to 219 residues: Uracil-DNA glycosylase (219 aa).

The active-site Proton acceptor is the D59.

Belongs to the uracil-DNA glycosylase (UDG) superfamily. UNG family.

The protein resides in the cytoplasm. It carries out the reaction Hydrolyzes single-stranded DNA or mismatched double-stranded DNA and polynucleotides, releasing free uracil.. Functionally, excises uracil residues from the DNA which can arise as a result of misincorporation of dUMP residues by DNA polymerase or due to deamination of cytosine. This Staphylococcus haemolyticus (strain JCSC1435) protein is Uracil-DNA glycosylase.